Reading from the N-terminus, the 388-residue chain is P2X purinoceptor 4 (388 aa).

Residues 1–33 (MAGCCAALAAFLFEYDTPRIVLIRSRKVGLMNR) lie on the Cytoplasmic side of the membrane. The chain crosses the membrane as a helical span at residues 34–54 (AVQLLILAYVIGWVFVWEKGY). Topologically, residues 55 to 338 (QETDSVVSSV…KFDIIPTMIN (284 aa)) are extracellular. Residues Lys67 and Lys69 each contribute to the ATP site. Residues Lys67 and Lys69 each coordinate CTP. Residues Asn75 and Asn110 are each glycosylated (N-linked (GlcNAc...) asparagine). 3 disulfides stabilise this stretch: Cys116–Cys165, Cys126–Cys149, and Cys132–Cys159. Residues Asn153 and Asn184 are each glycosylated (N-linked (GlcNAc...) asparagine). The ATP site is built by Thr186 and Leu188. Thr186 provides a ligand contact to CTP. N-linked (GlcNAc...) asparagine glycosylation is found at Asn199 and Asn208. 2 cysteine pairs are disulfide-bonded: Cys217-Cys227 and Cys261-Cys270. Residues Asn293, Arg295, and Lys313 each contribute to the ATP site. Residues Asn293, Arg295, and Lys313 each contribute to the CTP site. A helical transmembrane segment spans residues 339–359 (IGSGLALLGMATVLCDIIVLY). The Cytoplasmic portion of the chain corresponds to 360 to 388 (CMKKRLYYREKKYKYVEDYEQGLASELDQ).

The protein belongs to the P2X receptor family. As to quaternary structure, functional P2RXs are organized as homomeric and heteromeric trimers. Forms heterotrimer with P2RX1. Interacts with P2RX7 (via C-terminus); this interaction is functional only in the presence of ATP. Forms heterotrimer with P2RX4; functional differences between homomeric P2RX4 and P2RX4/6 heterotrimer are minor. Interacts with AP1M2.

It localises to the cell membrane. It is found in the lysosome membrane. It carries out the reaction K(+)(in) = K(+)(out). The enzyme catalyses Na(+)(in) = Na(+)(out). It catalyses the reaction Ca(2+)(in) = Ca(2+)(out). Activated by ATP. pH-dependent and inhibited by acidic pH. In terms of biological role, ATP-gated nonselective transmembrane cation channel permeable to potassium, sodium and calcium. CTP, but not GTP or UTP, functions as a weak affinity agonist for P2RX4. Activated by extracellularly released ATP, it plays multiple role in immunity and central nervous system physiology. Plays a key role in initial steps of T-cell activation and Ca(2+) microdomain formation. Also participates in basal T-cell activity without TCR/CD3 stimulation. Promotes the differentiation and activation of Th17 cells via expression of retinoic acid-related orphan receptor C/RORC. Upon activation, drives microglia motility via the PI3K/Akt pathway. Could also function as an ATP-gated cation channel of lysosomal membranes. In Homo sapiens (Human), this protein is P2X purinoceptor 4 (P2RX4).